The primary structure comprises 202 residues: Glycerol-3-phosphate acyltransferase (202 aa).

The next 6 membrane-spanning stretches (helical) occupy residues 3–23 (NLII…LILT), 61–81 (IATI…LKFL), 87–107 (LLWS…YLLF), 117–137 (AGAM…VWAV), 144–164 (ISSL…FIFN), and 167–187 (LEIH…YKHL).

This sequence belongs to the PlsY family. In terms of assembly, probably interacts with PlsX.

It is found in the cell inner membrane. It catalyses the reaction an acyl phosphate + sn-glycerol 3-phosphate = a 1-acyl-sn-glycero-3-phosphate + phosphate. It participates in lipid metabolism; phospholipid metabolism. Its function is as follows. Catalyzes the transfer of an acyl group from acyl-phosphate (acyl-PO(4)) to glycerol-3-phosphate (G3P) to form lysophosphatidic acid (LPA). This enzyme utilizes acyl-phosphate as fatty acyl donor, but not acyl-CoA or acyl-ACP. The polypeptide is Glycerol-3-phosphate acyltransferase (Campylobacter jejuni subsp. doylei (strain ATCC BAA-1458 / RM4099 / 269.97)).